The following is a 491-amino-acid chain: Glycylpeptide N-tetradecanoyltransferase (491 aa).

45–48 serves as a coordination point for tetradecanoyl-CoA; that stretch reads HKFW. The segment at 53-79 is disordered; sequence VPQITGSGASAPMEEGPIDDPKTPADV. Tetradecanoyl-CoA is bound by residues 182–184 and 190–194; these read LCV and SKRLA. Leu491 (proton acceptor; via carboxylate) is an active-site residue.

The protein belongs to the NMT family. As to quaternary structure, monomer.

It is found in the cytoplasm. The enzyme catalyses N-terminal glycyl-[protein] + tetradecanoyl-CoA = N-tetradecanoylglycyl-[protein] + CoA + H(+). Adds a myristoyl group to the N-terminal glycine residue of certain cellular proteins. The polypeptide is Glycylpeptide N-tetradecanoyltransferase (Cryptococcus neoformans (Filobasidiella neoformans)).